We begin with the raw amino-acid sequence, 513 residues long: OBERON-like protein (513 aa).

The segment at 166 to 235 (NGFCNLCMCV…VFRCQACSXT (70 aa)) adopts a PHD-type zinc-finger fold. A coiled-coil region spans residues 372–469 (RELADKAREA…LYEKIKLQES (98 aa)). Residues 493–513 (YNGPPKADSQSNDCHPFRTNP) are disordered. Positions 500-513 (DSQSNDCHPFRTNP) are enriched in polar residues.

Self-interacts and probably forms heteromers. Binds to VPg of pea seed borne mosaic virus (PSbMV), turnip mosaic virus (TuMV) and lettuce mosaic virus (LMV), but not with VPg of tobacco etch virus (TEV), cowpea mosaic virus (CPMV), tomato black ring virus (TBRV) and grapevine fan leaf virus (GFLV).

The protein localises to the nucleus. Functionally, required for the maintenance and/or establishment of both the shoot and root meristems, probably by controlling the expression of the meristem genes and of genes required for auxin responses. Involved in the development of the basal pole and in auxin-mediated root and vascular development in the embryo. Confers sensitivity to turnip mosaic virus (TuMV) probably by promoting viral movement and multiplication via interaction with TuMV VPg. The chain is OBERON-like protein (PVIP) from Pisum sativum (Garden pea).